Reading from the N-terminus, the 84-residue chain is Delta-conotoxin-like Bt6.4 (84 aa).

Positions 1–22 are cleaved as a signal peptide; sequence MKLTCMVIVAVLFLTAWTSVMA. A propeptide spanning residues 23–57 is cleaved from the precursor; that stretch reads DGSINRPDIAEGWQKFFSKARDEMKNRAASELNKR. 3 disulfide bridges follow: Cys58–Cys74, Cys65–Cys78, and Cys73–Cys82.

This sequence belongs to the conotoxin O1 superfamily. In terms of tissue distribution, expressed by the venom duct.

The protein localises to the secreted. This toxin activates voltage-gated sodium channels. It shifts the voltage-dependence of activation to more hyperpolarized potentials but has only little effect on channel inactivation. It is active on Nav1.3/SCN3A (EC(50)=3.98 nM), Nav1.4/SCN4A (EC(50)=4.99 nM), Nav1.6/SCN8A (EC(50)=1.27 nM) and Nav1.7/SCN9A (EC(50)=2.42 nM) voltage-gated sodium channels. In vivo, it induces nocifensive or pain-like behaviors in mice when injected intraplantarly. The protein is Delta-conotoxin-like Bt6.4 of Conus betulinus (Beech cone).